Consider the following 876-residue polypeptide: Phosphoenolpyruvate carboxylase (876 aa).

Residues His138 and Lys544 contribute to the active site.

It belongs to the PEPCase type 1 family. Mg(2+) serves as cofactor.

The catalysed reaction is oxaloacetate + phosphate = phosphoenolpyruvate + hydrogencarbonate. Forms oxaloacetate, a four-carbon dicarboxylic acid source for the tricarboxylic acid cycle. This Marinomonas sp. (strain MWYL1) protein is Phosphoenolpyruvate carboxylase.